The sequence spans 861 residues: Homeobox-leucine zipper protein HOX29 (861 aa).

Positions 2-65 (DASKYVRYTP…NRRCREKQRK (64 aa)) form a DNA-binding region, homeobox. Residues 57–99 (RRCREKQRKESSRLQALNRKLTAMNKLLMEENDRLQKQVSQLV) adopt a coiled-coil conformation. The region spanning 162–390 (RDASPAGLMS…VAHEDTRSVI (229 aa)) is the START domain.

This sequence belongs to the HD-ZIP homeobox family. Class III subfamily. In terms of tissue distribution, expressed in roots, stems and leaf blades.

The protein resides in the nucleus. In terms of biological role, probable transcription factor. The chain is Homeobox-leucine zipper protein HOX29 (HOX29) from Oryza sativa subsp. indica (Rice).